A 365-amino-acid chain; its full sequence is MNDSVRTTTTISSTKSLVHSFQLSAILHLFLLISFTPMSAAADQHASHATRRGLLRKLGLEHVPVQTGPSIDVPQHMWDIYDDDNDVDWVRHYYPKEIIEDNEGFLLSYNLSLAARNAHNEEVTKATLKLRLRRNNKARRSGNISIYFFEDDINNDRFQIESRSVDNLTEWIDFDVTAAFLRRTNRISFFIDLPEDVEIEETQSSSLSSLPYARAQSAPLIVFSDLSEPSSVRRKRSAQTGNSERKNRKKGRKHHNTEAESNLCRRTDFYVDFDDLNWQDWIMAPKGYDAYQCQGSCPNPMPAQLNATNHAIIQSLLHSLRPDEVPPPCCVPTETSPLSILYMDVDKVIVIREYADMRVESCGCR.

A signal peptide spans 1–42 (MNDSVRTTTTISSTKSLVHSFQLSAILHLFLLISFTPMSAAA). Positions 43–244 (DQHASHATRR…KRSAQTGNSE (202 aa)) are excised as a propeptide. N-linked (GlcNAc...) asparagine glycosylation is found at Asn-110, Asn-143, and Asn-167. A disordered region spans residues 231–259 (SVRRKRSAQTGNSERKNRKKGRKHHNTEA). The segment covering 246–255 (KNRKKGRKHH) has biased composition (basic residues). Disulfide bonds link Cys-264/Cys-330, Cys-293/Cys-362, and Cys-297/Cys-364. An N-linked (GlcNAc...) asparagine glycan is attached at Asn-306.

Belongs to the TGF-beta family. Homodimer; disulfide-linked. Interacts with drag-1. In terms of tissue distribution, expressed in embryos just prior to hatching and remains constant in most cells throughout the larval and adult stages. Expressed by AVA command interneurons.

The protein localises to the secreted. Functionally, ligand for the serine/threonine-protein kinase receptor type-1 sma-6 which activates a TGF-beta-like signaling pathway. Multifunctional protein that is involved in body size, male ectodermal patterning, innate immunity, lipid metabolism and neural plasticity. Dose-dependent regulator of body size, probably influencing the sizes of some or all cells rather than their number. Plays a role in patterning of male-specific genital sensilla (simple sense organs), known as rays, and mating-associated structures, spicules. Plays a protective role in response to infection by the Gram-negative bacterium S.marcescens, by activating expression of genes involved in innate immunity. Regulator of lipid homeostasis, acting non cell-autonomously in the hypodermis; partly dependent on the Insulin/IGF-1-like signaling (IIS) mediated pathway. Required for aversive olfactory learning of pathogenic bacteria in adults. Involved in gland cell morphology, possibly via activation of a Smad-independent TGF-beta signaling pathway. Required to oppose the autoregulation of expression of Runt-related transcription factor rnt-1. The sequence is that of Protein dbl-1 from Caenorhabditis elegans.